The primary structure comprises 149 residues: Urease accessory protein UreE (149 aa).

It belongs to the UreE family.

Its subcellular location is the cytoplasm. Its function is as follows. Involved in urease metallocenter assembly. Binds nickel. Probably functions as a nickel donor during metallocenter assembly. The protein is Urease accessory protein UreE of Ureaplasma parvum serovar 3 (strain ATCC 700970).